Reading from the N-terminus, the 547-residue chain is Cytochrome P450 monooxygenase cpsD (547 aa).

Residues 18-38 traverse the membrane as a helical segment; it reads LTGAALVVTLITSVIIVAADL. Heme is bound at residue Cys476. Residues 528–547 are disordered; that stretch reads RRRDARRTHEALGSKLKPEE. Residues 534–547 show a composition bias toward basic and acidic residues; the sequence is RTHEALGSKLKPEE.

Belongs to the cytochrome P450 family. Requires heme as cofactor.

The protein localises to the membrane. The catalysed reaction is campesine B + campesine C + reduced [NADPH--hemoprotein reductase] + O2 = campesine D + oxidized [NADPH--hemoprotein reductase] + 2 H2O + 2 H(+). It carries out the reaction 2 campesine B + reduced [NADPH--hemoprotein reductase] + O2 = campesine F + oxidized [NADPH--hemoprotein reductase] + 2 H2O + H(+). It catalyses the reaction campesine C + campesine A + reduced [NADPH--hemoprotein reductase] + O2 = campesine E + oxidized [NADPH--hemoprotein reductase] + 2 H2O + 2 H(+). The protein operates within alkaloid biosynthesis. Functionally, cytochrome P450 monooxygenase; part of the gene cluster that mediates the biosynthesis of campesine G, a dimeric indole piperazine alkaloid that shows good insecticidal activity Galleria mellonella. Within the pathway, cpsD acts as a dimerase that simultaneously catalyzes one C-C bond (C3-C3') and two C-N bonds (C2-N16' and C2'-N16) coupling reactions between campesines B and C to produce a heterodimer with unexpected 6/5/6/6/6/6/5/6 eight-ring scaffold called campesine D. CpsD is also able to catalyze oxidative heterocoupling od campesines A with B to produce campesine F and campesines A with C to produce campesine E. The non-canonical non-ribosomal peptide synthetase cpsA catalyzes the first steps of the pathway by producing L-tryptophanal and L-valinal from their respective amino-acids. These products condensate spontaneously to form trypyl-valyl pyrazine also known as didehydrocampesine A. The NmrA-like family domain-containing oxidoreductase cpsB is the next enzyme in cps pathway and reduces the unstable didehydrocampesine A to campesine A. The methyltransferase cpsF and the acetyltransferase cpsE both recognize N13 of piperazine ring to carry out methylation and acetylation of campesine A to produce campesine C and B, respectively. The cytochrome P450 monooxygenase cpsD then acts as a dimerase that catalyzes oxidative heterocoupling between campesine B and C to produce heterodimers with unexpected 6/5/6/6/6/6/5/6 eight-ring scaffold called campesine D. Finally,the cytochrome P450 monooxygenase cpsC is a regioselective dehydrogenase that catalyzes dehydrogenation reaction towards C2-N1 to produce campesine G. In Aspergillus campestris (strain IBT 28561), this protein is Cytochrome P450 monooxygenase cpsD.